The following is a 143-amino-acid chain: Crossover junction endodeoxyribonuclease Hjc (143 aa).

Glu-12 contacts Mg(2+). Residue Ser-32 is part of the active site. 2 residues coordinate Mg(2+): Asp-42 and Glu-55.

It belongs to the Holliday junction resolvase Hjc family. As to quaternary structure, homodimer. Interacts with PCNA subunit PCNA1. Requires Mg(2+) as cofactor.

The enzyme catalyses Endonucleolytic cleavage at a junction such as a reciprocal single-stranded crossover between two homologous DNA duplexes (Holliday junction).. With respect to regulation, autoinhibits at very high concentrations, possibly because of extreme junction distortion. Inhibition (and activity at low concentrations of enzyme) is stimulated by dsDNA and Sso7d. Activity stimulated by PCNA subunit PCNA1. Functionally, a structure-specific endonuclease that resolves Holliday junction (HJ) intermediates during genetic recombination; may have some degree of sequence preference in a mobile junction. Cleaves 4-way DNA junctions introducing paired nicks in opposing strands, leaving a 5'-terminal phosphate and a 3'-terminal hydroxyl group that are subsequently ligated to produce recombinant products. Can cleave all 4 strands 3 bases 3' of the junction center. Cleaves both mobile and immobile junctions. Modifies the structure of the 4-way DNA junction, a model Holliday junction structure. The protein forms multiple complexes with 4-way DNA, suggesting more than 1 homodimer can bind to each junction. The polypeptide is Crossover junction endodeoxyribonuclease Hjc (Saccharolobus solfataricus (strain ATCC 35092 / DSM 1617 / JCM 11322 / P2) (Sulfolobus solfataricus)).